Here is a 572-residue protein sequence, read N- to C-terminus: Phosphoenolpyruvate-protein phosphotransferase (572 aa).

The active-site Tele-phosphohistidine intermediate is the histidine 190. Residues arginine 297 and arginine 333 each coordinate phosphoenolpyruvate. Residues glutamate 427 and aspartate 451 each coordinate Mg(2+). Residues 450–451 (ND) and arginine 461 each bind phosphoenolpyruvate. Cysteine 498 (proton donor) is an active-site residue.

Belongs to the PEP-utilizing enzyme family. As to quaternary structure, homodimer. Mg(2+) is required as a cofactor.

Its subcellular location is the cytoplasm. The catalysed reaction is L-histidyl-[protein] + phosphoenolpyruvate = N(pros)-phospho-L-histidyl-[protein] + pyruvate. In terms of biological role, general (non sugar-specific) component of the phosphoenolpyruvate-dependent sugar phosphotransferase system (sugar PTS). This major carbohydrate active-transport system catalyzes the phosphorylation of incoming sugar substrates concomitantly with their translocation across the cell membrane. Enzyme I transfers the phosphoryl group from phosphoenolpyruvate (PEP) to the phosphoryl carrier protein (HPr). The protein is Phosphoenolpyruvate-protein phosphotransferase (ptsI) of Mycoplasma genitalium (strain ATCC 33530 / DSM 19775 / NCTC 10195 / G37) (Mycoplasmoides genitalium).